A 178-amino-acid polypeptide reads, in one-letter code: GTP-dependent dephospho-CoA kinase (178 aa).

Positions 55, 57, 74, 76, and 127 each coordinate GTP.

Belongs to the GTP-dependent DPCK family.

It carries out the reaction 3'-dephospho-CoA + GTP = GDP + CoA + H(+). It participates in cofactor biosynthesis; coenzyme A biosynthesis. Functionally, catalyzes the GTP-dependent phosphorylation of the 3'-hydroxyl group of dephosphocoenzyme A to form coenzyme A (CoA). The polypeptide is GTP-dependent dephospho-CoA kinase (Saccharolobus islandicus (strain Y.N.15.51 / Yellowstone #2) (Sulfolobus islandicus)).